A 458-amino-acid chain; its full sequence is Protein U54 (458 aa).

Residues Asn76, Asn102, Asn281, Asn321, Asn346, Asn434, and Asn451 are each glycosylated (N-linked (GlcNAc...) asparagine; by host).

This sequence belongs to the herpesviridae UL82 family.

The sequence is that of Protein U54 (U54) from Homo sapiens (Human).